A 59-amino-acid polypeptide reads, in one-letter code: UPF0434 protein VV1_2087 (59 aa).

The protein belongs to the UPF0434 family.

This Vibrio vulnificus (strain CMCP6) protein is UPF0434 protein VV1_2087.